We begin with the raw amino-acid sequence, 587 residues long: Kelch-like protein 3 (587 aa).

Positions 1–24 (MEGESVKPSPQPTEQAGDGEKNRR) are disordered. One can recognise a BTB domain in the interval 50 to 117 (CDVMIVAEDV…IYTAEIEVTE (68 aa)). The 103-residue stretch at 152 to 254 (CLGIRAFADV…PRDYLVQTVE (103 aa)) folds into the BACK domain. Phosphothreonine is present on Thr-295. Kelch repeat units follow at residues 302–347 (VMIV…FMAG), 348–394 (HVYA…VLND), 396–441 (LYAV…VVEG), 442–490 (KLYA…VLSG), 491–537 (QLYA…AVNG), and 539–585 (LYVV…VSAS). At Thr-375 the chain carries Phosphothreonine. Phosphoserine is present on residues Ser-376 and Ser-433.

The protein belongs to the KLHL3 family. As to quaternary structure, homodimer. Component of the BCR(KLHL3) E3 ubiquitin ligase complex, at least composed of CUL3 and KLHL3 and RBX1. Interacts with CLDN8. In terms of processing, phosphorylation at Ser-433 by PKA or PKC decreases the interaction with WNK1 and WNK4, leading to inhibit their degradation by the BCR(KLHL3) complex. Phosphorylated at Ser-433 by PKC in response to angiotensin II signaling, decreasing ability to promote degradation of WNK1 and WNK4, leading to activation of Na-Cl cotransporter SLC12A3/NCC. Phosphorylation at Ser-433 is increased by insulin. Dephosphorylated at Ser-433 by calcineurin PPP3CA, promoting degradation of WNK1 and WNK4.

It is found in the cytoplasm. Its subcellular location is the cytoskeleton. It localises to the cytosol. It functions in the pathway protein modification; protein ubiquitination. Substrate-specific adapter of a BCR (BTB-CUL3-RBX1) E3 ubiquitin ligase complex that acts as a regulator of ion transport in the distal nephron. The BCR(KLHL3) complex acts by mediating ubiquitination and degradation of WNK1 and WNK4, two activators of Na-Cl cotransporter SLC12A3/NCC in distal convoluted tubule cells of kidney, thereby regulating NaCl reabsorption. The BCR(KLHL3) complex also mediates ubiquitination and degradation of WNK3. The BCR(KLHL3) complex also mediates ubiquitination of CLDN8, a tight-junction protein required for paracellular chloride transport in the kidney, leading to its degradation. The sequence is that of Kelch-like protein 3 (Klhl3) from Rattus norvegicus (Rat).